The following is a 1026-amino-acid chain: RecBCD enzyme subunit RecB (1026 aa).

One can recognise a UvrD-like helicase ATP-binding domain in the interval 1–438 (MSSFDIFSPT…LILDTNYRST (438 aa)). Residues 1–766 (MSSFDIFSPT…LANYANITQH (766 aa)) form a DNA-binding and helicase activity, interacts with RecC region. Residue 21–28 (ASAGTGKT) coordinates ATP. A UvrD-like helicase C-terminal domain is found at 452–700 (PSPFLETPQT…KITTVHSSKG (249 aa)). The nuclease activity, interacts with RecD and RecA stretch occupies residues 815–1026 (SQPIYSFSST…KGNGFLQPSP (212 aa)). Positions 854, 940, and 953 each coordinate Mg(2+). Asp-953 functions as the For nuclease activity in the catalytic mechanism.

It belongs to the helicase family. UvrD subfamily. In terms of assembly, heterotrimer of RecB, RecC and RecD. All subunits contribute to DNA-binding. Interacts with RecA. Mg(2+) serves as cofactor.

It carries out the reaction Exonucleolytic cleavage (in the presence of ATP) in either 5'- to 3'- or 3'- to 5'-direction to yield 5'-phosphooligonucleotides.. It catalyses the reaction Couples ATP hydrolysis with the unwinding of duplex DNA by translocating in the 3'-5' direction.. The catalysed reaction is ATP + H2O = ADP + phosphate + H(+). Functionally, a helicase/nuclease that prepares dsDNA breaks (DSB) for recombinational DNA repair. Binds to DSBs and unwinds DNA via a highly rapid and processive ATP-dependent bidirectional helicase activity. Unwinds dsDNA until it encounters a Chi (crossover hotspot instigator) sequence from the 3' direction. Cuts ssDNA a few nucleotides 3' to the Chi site. The properties and activities of the enzyme are changed at Chi. The Chi-altered holoenzyme produces a long 3'-ssDNA overhang and facilitates RecA-binding to the ssDNA for homologous DNA recombination and repair. Holoenzyme degrades any linearized DNA that is unable to undergo homologous recombination. In the holoenzyme this subunit contributes ATPase, 3'-5' helicase, exonuclease activity and loads RecA onto ssDNA. The polypeptide is RecBCD enzyme subunit RecB (Chlamydia muridarum (strain MoPn / Nigg)).